A 406-amino-acid chain; its full sequence is MSYFTEYKDLIAEGDLVLVWISRGNVKQLRIKSGEVFNTRYGSFAHDDIVGRPYGSQIGVRTKGSNRFGFIHVLQPTPELWTLSLPHRTQIVYTPDSSYIMQRLGCSPQSRVIEAGTGSGSFSHAFARTVGQLFSYEFHHMRYEQALAEFQEHGLIADGNVTITHRDVCQKGFLIKAGDTTSYEFLEGQDSVSVNADCIFLDLPAPWEAIPHLDAVIAKDRTARLCCFSPCIEQVDKTLEALELHGWEEIETVEIQGRQYESRRQMVRQLDDALERLRDVKRRKQHGTERRKRLGEQLGSVEELTDDVRPKTPKTSYNPFGKGSRVKEGDNGFEWKQVAKVESEIKSHTSYLTFASKILFKSRDENTVSQLLEQYKDFNPNVKAASKLDKRPQETSFEESQASNSV.

S-adenosyl-L-methionine is bound by residues serine 119 to serine 121, glutamate 137, arginine 142, aspartate 167 to valine 168, and aspartate 202. The segment covering lysine 281–arginine 293 has biased composition (basic residues). 2 disordered regions span residues lysine 281 to glycine 323 and alanine 385 to valine 406. A compositionally biased stretch (polar residues) spans glutamate 394 to valine 406.

Belongs to the class I-like SAM-binding methyltransferase superfamily. TRM61 family. As to quaternary structure, heterotetramer; composed of two copies of TRM6 and two copies of TRM61.

The protein resides in the nucleus. It catalyses the reaction adenosine(58) in tRNA + S-adenosyl-L-methionine = N(1)-methyladenosine(58) in tRNA + S-adenosyl-L-homocysteine + H(+). Its function is as follows. Catalytic subunit of tRNA (adenine-N(1)-)-methyltransferase, which catalyzes the formation of N(1)-methyladenine at position 58 (m1A58) in initiator methionyl-tRNA. This is tRNA (adenine(58)-N(1))-methyltransferase catalytic subunit TRM61 (TRM61) from Eremothecium gossypii (strain ATCC 10895 / CBS 109.51 / FGSC 9923 / NRRL Y-1056) (Yeast).